Here is a 1237-residue protein sequence, read N- to C-terminus: U3 small nucleolar RNA-associated protein 22 (1237 aa).

Positions 1–78 (MATSVKRKAS…TNTAATRHNG (78 aa)) are disordered. 2 positions are modified to phosphoserine: Ser-10 and Ser-58. A Phosphothreonine modification is found at Thr-60. Residues 61–78 (SPESNEVATNTAATRHNG) show a composition bias toward polar residues. Ser-64 is modified (phosphoserine).

Belongs to the NRAP family. In terms of assembly, interacts with snoRNA U3. Interacts with MPP10. Component of the ribosomal small subunit (SSU) processome composed of at least 40 protein subunits and snoRNA U3. Interacts with UBP10.

Its subcellular location is the nucleus. It localises to the nucleolus. In terms of biological role, involved in nucleolar processing of pre-18S ribosomal RNA and ribosome assembly. The polypeptide is U3 small nucleolar RNA-associated protein 22 (UTP22) (Saccharomyces cerevisiae (strain ATCC 204508 / S288c) (Baker's yeast)).